The sequence spans 191 residues: UPF0302 protein SA1295 (191 aa).

It belongs to the UPF0302 family.

This is UPF0302 protein SA1295 from Staphylococcus aureus (strain N315).